The sequence spans 221 residues: MATSTMSVCSSAYSDSWQVDACPESCCEPPCCATSCCAPAPCLTLVCTPVSCVSSPCCQAACEPSPCQSGCTSSCTPSCCQQSSCQPACCTSSPCQQACCVPVCCKPVCCVPVCCKPVCCKPICCVPVCSGASSSCCQQSSRQPACCTTSCCRPSSSVSLLCRPVCRSTCCVPIPSCCAPASTCQPSCCRPASCVSLLCRPTCSRLSSACCGLSSGQKSSC.

Repeat copies occupy residues 26–30, 31–35, 36–40, 57–61, 79–83, 89–93, 99–103, 104–108, 109–113, 114–118, 119–123, 124–128, 136–140, 146–150, 151–155, 177–181, 188–192, and 210–214. An 18 X 5 AA repeats of C-C-X(3) region spans residues 26 to 214; the sequence is CCEPPCCATS…RLSSACCGLS (189 aa).

Belongs to the KRTAP type 10 family. As to quaternary structure, interacts with hair keratins. In terms of tissue distribution, restricted to a narrow region of the hair fiber cuticle, lying approximately 20 cell layers above the apex of the dermal papilla of the hair root; not detected in any other tissues.

In the hair cortex, hair keratin intermediate filaments are embedded in an interfilamentous matrix, consisting of hair keratin-associated proteins (KRTAP), which are essential for the formation of a rigid and resistant hair shaft through their extensive disulfide bond cross-linking with abundant cysteine residues of hair keratins. The matrix proteins include the high-sulfur and high-glycine-tyrosine keratins. The sequence is that of Keratin-associated protein 10-3 (KRTAP10-3) from Homo sapiens (Human).